A 417-amino-acid polypeptide reads, in one-letter code: Candidapepsin-4 (417 aa).

The signal sequence occupies residues 1–18 (MFLQNILSVLAFALLIDA). Residues 19–75 (APVKRSTGFVTLDFNVKRSLVDPKDPTVEVKRSPLFLDIEPTEIPVDDTGRNDVGKR) constitute a propeptide, activation peptide. One can recognise a Peptidase A1 domain in the interval 89–403 (YSADITIGSN…DLDDRKISMA (315 aa)). Residue aspartate 107 is part of the active site. An intrachain disulfide couples cysteine 122 to cysteine 134. Asparagine 137 carries an N-linked (GlcNAc...) asparagine glycan. Residue aspartate 293 is part of the active site. The cysteines at positions 331 and 369 are disulfide-linked.

Belongs to the peptidase A1 family. Post-translationally, O-glycosylated.

It localises to the secreted. The enzyme catalyses Preferential cleavage at the carboxyl of hydrophobic amino acids, but fails to cleave 15-Leu-|-Tyr-16, 16-Tyr-|-Leu-17 and 24-Phe-|-Phe-25 of insulin B chain. Activates trypsinogen, and degrades keratin.. This is Candidapepsin-4 (SAP4) from Candida albicans (strain WO-1) (Yeast).